We begin with the raw amino-acid sequence, 347 residues long: ATP-dependent (S)-NAD(P)H-hydrate dehydratase (347 aa).

Positions 53-344 (TLQLVRNIIP…AEVGAAFSKL (292 aa)) constitute a YjeF C-terminal domain. Tyr85 carries the post-translational modification Phosphotyrosine. (6S)-NADPHX contacts are provided by residues Gly153 and 206–212 (NHVEFSR). Asn240 is a glycosylation site (N-linked (GlcNAc...) asparagine). Residues 246-250 (KGERD) and 265-274 (GSSRRCGGQG) each bind ATP. Residue Asp275 participates in (6S)-NADPHX binding. N-linked (GlcNAc...) asparagine glycosylation is present at Asn297.

The protein belongs to the NnrD/CARKD family. It depends on Mg(2+) as a cofactor.

The protein resides in the mitochondrion. It carries out the reaction (6S)-NADHX + ATP = ADP + phosphate + NADH + H(+). The enzyme catalyses (6S)-NADPHX + ATP = ADP + phosphate + NADPH + H(+). Functionally, catalyzes the dehydration of the S-form of NAD(P)HX at the expense of ATP, which is converted to ADP. Together with NAD(P)HX epimerase, which catalyzes the epimerization of the S- and R-forms, the enzyme allows the repair of both epimers of NAD(P)HX, a damaged form of NAD(P)H that is a result of enzymatic or heat-dependent hydration. The polypeptide is ATP-dependent (S)-NAD(P)H-hydrate dehydratase (Homo sapiens (Human)).